Here is a 228-residue protein sequence, read N- to C-terminus: HTH-type transcriptional repressor RspR (228 aa).

The HTH gntR-type domain occupies 11–78 (QPVNQQIYRI…PQRGSYVNKI (68 aa)). The segment at residues 38 to 57 (EKEVSVRFNVSRQPVREAFI) is a DNA-binding region (H-T-H motif).

Functionally, repressor of the rspAB operon. Acts by binding directly to the upstream region of rspA. In Escherichia coli (strain K12), this protein is HTH-type transcriptional repressor RspR (rspR).